The sequence spans 206 residues: Ribosome maturation factor RimP (206 aa).

A disordered region spans residues 164 to 206 (GGIPEGRAVPSDAVDLTDDSGVDSVEDDEAELEDVENEEGFDK). Positions 178-206 (DLTDDSGVDSVEDDEAELEDVENEEGFDK) are enriched in acidic residues.

This sequence belongs to the RimP family.

It is found in the cytoplasm. In terms of biological role, required for maturation of 30S ribosomal subunits. In Rhodococcus erythropolis (strain PR4 / NBRC 100887), this protein is Ribosome maturation factor RimP.